The sequence spans 433 residues: Glutamate-1-semialdehyde 2,1-aminomutase (433 aa).

Position 270 is an N6-(pyridoxal phosphate)lysine (lysine 270).

This sequence belongs to the class-III pyridoxal-phosphate-dependent aminotransferase family. HemL subfamily. As to quaternary structure, homodimer. The cofactor is pyridoxal 5'-phosphate.

It localises to the cytoplasm. The enzyme catalyses (S)-4-amino-5-oxopentanoate = 5-aminolevulinate. Its pathway is porphyrin-containing compound metabolism; protoporphyrin-IX biosynthesis; 5-aminolevulinate from L-glutamyl-tRNA(Glu): step 2/2. This chain is Glutamate-1-semialdehyde 2,1-aminomutase, found in Clostridium novyi (strain NT).